The primary structure comprises 74 residues: Mitochondrial import receptor subunit TOM6 homolog (74 aa).

A compositionally biased stretch (low complexity) spans methionine 1 to valine 20. The interval methionine 1–proline 21 is disordered. Alanine 2 is subject to N-acetylalanine.

This sequence belongs to the Tom6 family. In terms of assembly, forms part of the preprotein translocase complex of the outer mitochondrial membrane (TOM complex) which consists of at least 7 different proteins (TOMM5, TOMM6, TOMM7, TOMM20, TOMM22, TOMM40 and TOMM70).

The protein localises to the mitochondrion outer membrane. The sequence is that of Mitochondrial import receptor subunit TOM6 homolog (Tomm6) from Mus musculus (Mouse).